The primary structure comprises 188 residues: Elongation factor P (188 aa).

K34 is modified (N6-(3,6-diaminohexanoyl)-5-hydroxylysine).

The protein belongs to the elongation factor P family. May be beta-lysylated on the epsilon-amino group of Lys-34 by the combined action of EpmA and EpmB, and then hydroxylated on the C5 position of the same residue by EpmC (if this protein is present). Lysylation is critical for the stimulatory effect of EF-P on peptide-bond formation. The lysylation moiety may extend toward the peptidyltransferase center and stabilize the terminal 3-CCA end of the tRNA. Hydroxylation of the C5 position on Lys-34 may allow additional potential stabilizing hydrogen-bond interactions with the P-tRNA.

The protein resides in the cytoplasm. It participates in protein biosynthesis; polypeptide chain elongation. Involved in peptide bond synthesis. Alleviates ribosome stalling that occurs when 3 or more consecutive Pro residues or the sequence PPG is present in a protein, possibly by augmenting the peptidyl transferase activity of the ribosome. Modification of Lys-34 is required for alleviation. The protein is Elongation factor P of Hamiltonella defensa subsp. Acyrthosiphon pisum (strain 5AT).